Reading from the N-terminus, the 356-residue chain is Transcription factor MafB (356 aa).

Disordered regions lie at residues 49-79 (RLQP…PTEQ) and 140-240 (YRGA…LNVE). The span at 55-77 (SVSSTPISTPCSSVPSSPSFSPT) shows a compositional bias: low complexity. Basic residues-rich tracts occupy residues 183–196 (AHGH…HHHH) and 212–223 (HHRHHHHHHPHG). The interval 270–295 (RLKQKRRTLKNRGYAQSCRFKRVQQK) is basic motif. The bZIP domain occupies 270–333 (RLKQKRRTLK…DAYKLKCEKL (64 aa)). Residues 298–319 (LENEKTQLINQVEQLKQEINRL) form a leucine-zipper region.

The protein belongs to the bZIP family. Maf subfamily. As to quaternary structure, homodimer or heterodimer with other bHLH-Zip transcription factors. Binds DNA as a homodimer or a heterodimer.

It localises to the nucleus. May act as a transcriptional activator or repressor. Involved in neurogenesis. Involved in the development of rhombomeres (r) 5 and 6 segments from their common precursor 'proto-segment' in the hindbrain. This chain is Transcription factor MafB (mafb), found in Danio rerio (Zebrafish).